Here is a 278-residue protein sequence, read N- to C-terminus: Small ribosomal subunit protein uS2 (278 aa).

A disordered region spans residues 233-257 (IDMEAAGEAPANKGKKKSVKARLDK).

Belongs to the universal ribosomal protein uS2 family.

This chain is Small ribosomal subunit protein uS2, found in Bacteroides thetaiotaomicron (strain ATCC 29148 / DSM 2079 / JCM 5827 / CCUG 10774 / NCTC 10582 / VPI-5482 / E50).